A 705-amino-acid chain; its full sequence is Polyribonucleotide nucleotidyltransferase (705 aa).

Residues Asp-486 and Asp-492 each contribute to the Mg(2+) site. A KH domain is found at 553-612 (PQFHTMKVDPEKIRDIIGKGGATIRSITEETGASIDIDDDGTVKIYGDDGDSLQGAINRI). The 69-residue stretch at 622-690 (GEVYKGKVVR…QRGRIKLSIK (69 aa)) folds into the S1 motif domain.

It belongs to the polyribonucleotide nucleotidyltransferase family. In terms of assembly, component of the RNA degradosome, which is a multiprotein complex involved in RNA processing and mRNA degradation. Mg(2+) serves as cofactor.

Its subcellular location is the cytoplasm. It catalyses the reaction RNA(n+1) + phosphate = RNA(n) + a ribonucleoside 5'-diphosphate. Its function is as follows. Involved in mRNA degradation. Catalyzes the phosphorolysis of single-stranded polyribonucleotides processively in the 3'- to 5'-direction. The protein is Polyribonucleotide nucleotidyltransferase of Teredinibacter turnerae (strain ATCC 39867 / T7901).